The chain runs to 346 residues: MSFRTIEWRDNKVVMIDQTRLPGEEVYNEYTDFQSVAEAIRGMIIRGAPAIGVAAAMGIALGAREIIADTHESFFRQLDNVCNVMARTRPTAVNLFWAIERMKRVAESHRDKDLNSIREILKAEAIRIEEEDLEICRAIGRNGAPLIKEGATILTHCNAGGLATAGYGTALGVIRAAHEAGKRIQVFADETRPWLQGARLTSWELMKDGIPVTLISDNMAGYFMRKGEIDVCVVGADRIAANGDTANKIGTYSVAVLAKENKIPFYVAAPVSTLDLSLKSGEDIPIEERHSREVTHLQGLPVAPEGVKVRNPAFDVTPARYIAGIITEKGVVRGDYEKELRALVGR.

Residues 46 to 48 (RGA), R89, and Q196 each bind substrate. D237 acts as the Proton donor in catalysis. 247 to 248 (NK) contributes to the substrate binding site.

The protein belongs to the eIF-2B alpha/beta/delta subunits family. MtnA subfamily.

It carries out the reaction 5-(methylsulfanyl)-alpha-D-ribose 1-phosphate = 5-(methylsulfanyl)-D-ribulose 1-phosphate. It participates in amino-acid biosynthesis; L-methionine biosynthesis via salvage pathway; L-methionine from S-methyl-5-thio-alpha-D-ribose 1-phosphate: step 1/6. Its function is as follows. Catalyzes the interconversion of methylthioribose-1-phosphate (MTR-1-P) into methylthioribulose-1-phosphate (MTRu-1-P). The chain is Methylthioribose-1-phosphate isomerase from Geotalea uraniireducens (strain Rf4) (Geobacter uraniireducens).